The chain runs to 2599 residues: Protein DOP1 homolog (2599 aa).

Disordered regions lie at residues 532–571 (EQSG…SDSR) and 595–701 (ASNQ…LDEE). Polar residues-rich tracts occupy residues 534–549 (SGGS…NSAS), 595–604 (ASNQSVGRQS), and 625–636 (ASDTGQQSSSDL). Position 753 is a phosphoserine (S753). Positions 1240-1251 (PRIEIPHKETPL) are enriched in basic and acidic residues. Disordered stretches follow at residues 1240–1316 (PRIE…SSSA) and 1347–1368 (TYRL…EQKD). The span at 1264–1282 (QPSQEQPANQPDNSLQYDQ) shows a compositional bias: polar residues. Basic and acidic residues predominate over residues 1297 to 1309 (SELRETSIEKEDS). Residue T1355 is modified to Phosphothreonine. A phosphoserine mark is found at S1360, S1363, and S1371. Residues 1409-1442 (CISKTSTDSNISGSHVEQPEQEEETEPGTESTIN) form a disordered region. Positions 1410–1423 (ISKTSTDSNISGSH) are enriched in polar residues. S2525 bears the Phosphoserine mark.

This sequence belongs to the DOP1 family.

Its subcellular location is the golgi apparatus membrane. Its function is as follows. May be involved in protein traffic between late Golgi and early endosomes. This chain is Protein DOP1 homolog, found in Drosophila melanogaster (Fruit fly).